The following is a 1009-amino-acid chain: MPESVIAGIPVHFPFEPYNVQRDYMEKVIICLRDGTNGVLESPTGTGKTLSLLCASLAWIRTRQSEHQQQMIKLKATSKEGGPGSGPGGDLSELAMTVGQANNWGVPKVIYASRTHSQLNQAMRELKRTAYANMRSVVLGSRDQLCIHPEVMKEQGNSNKVNLCKLRVHSKTCTFQLRVESKKDHPDFRGPSIMDIEDLVRVGQKLKMCPYYASKELVAQADITFMPYNYLLDPKARKANKIELGNTIIILDEAHNIEKICEESASVQIRSSDVAMAIEDVTHIMKVFTSGESQEAGGDEPKDFTLDDLTLLKEMLLELEKAIDAVVVDNPTDGTTYPASLMYELLGKANFTYGNCATIVALLDKLVQYLMVASQHMTIRKGGTFTMLSDLLTIVFANKENIMSKVHLSFKVHVQVEESNKQQGKSGAIQGKQQGWLGKGNITTTGTSSKAAKIVNFWCFNPGFGMEQLLNTQVRSVILTSGTLAPLKPLIAELAIPVAQHLENPHIVDQSQVYVKIIGTGPDRQQLISNFKNRDNPKYISSLGQTILNVARIVPDGLLVFFPSYPMLNKCVDAWQASGLWADISCKKPIFVEPRGKDQFTSTMEEFYQAIRDSKGAVFMAVCRGKVSEGLDFADRNGRAVIITGLPFPPLKDPKVILKRRYLETNRTKENQLLSGQEWYNLDATRAVNQAIGRVIRHRNDYGAILLCDSRFQDASQVQQLSKWIRGHLGARPQSSPFGPIVRELRQFFKHAEETMKQPDVREEEQPLMNVCKVEEVGTQPVIPTIKQEPGNNATFRKANKSAIKVEMANSINSWTPADYASAAGRTLGKAAPNAMDFMSRLDSNVSSIDFNCSGSADSGSGGCGSSSLVTIHKRERSSPGVTDTVATQTTKKRYKLAENIKTEPKSNSSQQVKVAPESRADFLRELRSLISQDQFRDFGKVLIEYRSGTDENFESLMTVLLDVLAAPKMRYLFIGMRRFLRNEHKAEFDVRLASLNLAQESSPNKRIP.

In terms of domain architecture, Helicase ATP-binding spans 7-322 (AGIPVHFPFE…KEMLLELEKA (316 aa)). 42 to 49 (SPTGTGKT) lines the ATP pocket. Positions 146, 164, 173, and 209 each coordinate [4Fe-4S] cluster. The DEAH box motif lies at 252–255 (DEAH).

This sequence belongs to the helicase family. RAD3/XPD subfamily.

The protein localises to the nucleus. The enzyme catalyses ATP + H2O = ADP + phosphate + H(+). Functionally, a probable ATP-dependent DNA helicase implicated in DNA repair and the maintenance of genomic stability. Acts as an anti-recombinase to counteract toxic recombination and limit crossover during meiosis. Regulates meiotic recombination and crossover homeostasis by physically dissociating strand invasion events and thereby promotes noncrossover repair by meiotic synthesis dependent strand annealing (SDSA) as well as disassembly of D loop recombination intermediates. In Drosophila persimilis (Fruit fly), this protein is Regulator of telomere elongation helicase 1 homolog.